An 837-amino-acid polypeptide reads, in one-letter code: Protein translocase subunit SecA (837 aa).

ATP contacts are provided by residues Gln87, 105 to 109 (GEGKT), and Asp494. The interval 788–837 (HKESKSDLEYSDSENTETKKKPKRRSEPKVGRNDPCPCGSGKKYKKCCGK) is disordered. The Zn(2+) site is built by Cys823, Cys825, Cys834, and Cys835.

Belongs to the SecA family. In terms of assembly, monomer and homodimer. Part of the essential Sec protein translocation apparatus which comprises SecA, SecYEG and auxiliary proteins SecDF-YajC and YidC. Zn(2+) serves as cofactor.

It localises to the cell inner membrane. It is found in the cytoplasm. The enzyme catalyses ATP + H2O + cellular proteinSide 1 = ADP + phosphate + cellular proteinSide 2.. Functionally, part of the Sec protein translocase complex. Interacts with the SecYEG preprotein conducting channel. Has a central role in coupling the hydrolysis of ATP to the transfer of proteins into and across the cell membrane, serving as an ATP-driven molecular motor driving the stepwise translocation of polypeptide chains across the membrane. The protein is Protein translocase subunit SecA of Maridesulfovibrio salexigens (strain ATCC 14822 / DSM 2638 / NCIMB 8403 / VKM B-1763) (Desulfovibrio salexigens).